Consider the following 253-residue polypeptide: Probable transcriptional regulatory protein Mlut_12910 (253 aa).

The protein belongs to the TACO1 family.

It localises to the cytoplasm. The polypeptide is Probable transcriptional regulatory protein Mlut_12910 (Micrococcus luteus (strain ATCC 4698 / DSM 20030 / JCM 1464 / CCM 169 / CCUG 5858 / IAM 1056 / NBRC 3333 / NCIMB 9278 / NCTC 2665 / VKM Ac-2230) (Micrococcus lysodeikticus)).